A 177-amino-acid polypeptide reads, in one-letter code: Large ribosomal subunit protein uL6 (177 aa).

It belongs to the universal ribosomal protein uL6 family. As to quaternary structure, part of the 50S ribosomal subunit.

In terms of biological role, this protein binds to the 23S rRNA, and is important in its secondary structure. It is located near the subunit interface in the base of the L7/L12 stalk, and near the tRNA binding site of the peptidyltransferase center. The sequence is that of Large ribosomal subunit protein uL6 from Xanthobacter autotrophicus (strain ATCC BAA-1158 / Py2).